We begin with the raw amino-acid sequence, 334 residues long: Protein CUP-SHAPED COTYLEDON 3 (334 aa).

Residues 22–171 enclose the NAC domain; it reads LPPGFRFHPT…EWVICRVFNK (150 aa). Residues 121 to 177 mediate DNA binding; it reads VGMKKTLVFYKGRAPRGLKTKWVMHEYRLENDHSHRHTCKEEWVICRVFNKTGDRKN.

In terms of tissue distribution, in a general manner, present at the boundaries between mersitems and araising primordia.

It is found in the nucleus. Its function is as follows. Transcription activator. Involved in molecular mechanisms regulating shoot apical meristem (SAM) formation during embryogenesis and organ separation. Required for axillary meristem initiation and separation of the meristem from the main stem. May act as an inhibitor of cell division. This is Protein CUP-SHAPED COTYLEDON 3 (NAC031) from Arabidopsis thaliana (Mouse-ear cress).